A 378-amino-acid chain; its full sequence is Chaperone protein DnaJ (378 aa).

Residues 5–70 (DYYEVLGVAK…QKRAAYDQYG (66 aa)) form the J domain. Residues 138–216 (GYDTQIRVPS…CHGSGKVKET (79 aa)) form a CR-type zinc finger. Zn(2+) is bound by residues Cys-151, Cys-154, Cys-168, Cys-171, Cys-190, Cys-193, Cys-204, and Cys-207. 4 CXXCXGXG motif repeats span residues 151 to 158 (CEVCHGSG), 168 to 175 (CPTCHGQG), 190 to 197 (CPKCHGTG), and 204 to 211 (CVHCHGSG).

The protein belongs to the DnaJ family. In terms of assembly, homodimer. The cofactor is Zn(2+).

Its subcellular location is the cytoplasm. Its function is as follows. Participates actively in the response to hyperosmotic and heat shock by preventing the aggregation of stress-denatured proteins and by disaggregating proteins, also in an autonomous, DnaK-independent fashion. Unfolded proteins bind initially to DnaJ; upon interaction with the DnaJ-bound protein, DnaK hydrolyzes its bound ATP, resulting in the formation of a stable complex. GrpE releases ADP from DnaK; ATP binding to DnaK triggers the release of the substrate protein, thus completing the reaction cycle. Several rounds of ATP-dependent interactions between DnaJ, DnaK and GrpE are required for fully efficient folding. Also involved, together with DnaK and GrpE, in the DNA replication of plasmids through activation of initiation proteins. The protein is Chaperone protein DnaJ of Burkholderia ambifaria (strain MC40-6).